Reading from the N-terminus, the 423-residue chain is UDP-N-acetylmuramoylalanine--D-glutamate ligase (423 aa).

112 to 118 contacts ATP; it reads GSVGKST.

Belongs to the MurCDEF family.

The protein localises to the cytoplasm. It catalyses the reaction UDP-N-acetyl-alpha-D-muramoyl-L-alanine + D-glutamate + ATP = UDP-N-acetyl-alpha-D-muramoyl-L-alanyl-D-glutamate + ADP + phosphate + H(+). The protein operates within cell wall biogenesis; peptidoglycan biosynthesis. In terms of biological role, cell wall formation. Catalyzes the addition of glutamate to the nucleotide precursor UDP-N-acetylmuramoyl-L-alanine (UMA). In Thermosipho africanus (strain TCF52B), this protein is UDP-N-acetylmuramoylalanine--D-glutamate ligase.